Reading from the N-terminus, the 868-residue chain is uncharacterized protein (868 aa).

It is found in the cytoplasm. It localises to the nucleus. This is an uncharacterized protein from Schizosaccharomyces pombe (strain 972 / ATCC 24843) (Fission yeast).